The following is a 130-amino-acid chain: Small ribosomal subunit protein uS11 (130 aa).

This sequence belongs to the universal ribosomal protein uS11 family. In terms of assembly, part of the 30S ribosomal subunit. Interacts with proteins S7 and S18. Binds to IF-3.

In terms of biological role, located on the platform of the 30S subunit, it bridges several disparate RNA helices of the 16S rRNA. Forms part of the Shine-Dalgarno cleft in the 70S ribosome. This chain is Small ribosomal subunit protein uS11, found in Thiobacillus denitrificans (strain ATCC 25259 / T1).